Here is a 441-residue protein sequence, read N- to C-terminus: Homogentisate 1,2-dioxygenase (441 aa).

Histidine 287 (proton acceptor) is an active-site residue. Residues histidine 330 and glutamate 336 each coordinate Fe cation. Positions 345 and 366 each coordinate homogentisate. Residue histidine 366 participates in Fe cation binding.

It belongs to the homogentisate dioxygenase family. In terms of assembly, hexamer; dimer of trimers. Fe cation serves as cofactor.

It catalyses the reaction homogentisate + O2 = 4-maleylacetoacetate + H(+). Its pathway is amino-acid degradation; L-phenylalanine degradation; acetoacetate and fumarate from L-phenylalanine: step 4/6. In terms of biological role, involved in the catabolism of homogentisate (2,5-dihydroxyphenylacetate or 2,5-OH-PhAc), a central intermediate in the degradation of phenylalanine and tyrosine. Catalyzes the oxidative ring cleavage of the aromatic ring of homogentisate to yield maleylacetoacetate. The chain is Homogentisate 1,2-dioxygenase from Xanthomonas oryzae pv. oryzae (strain MAFF 311018).